The sequence spans 176 residues: 3-hydroxydecanoyl-[acyl-carrier-protein] dehydratase (176 aa).

H75 is a catalytic residue.

Belongs to the thioester dehydratase family. FabA subfamily. In terms of assembly, homodimer.

It localises to the cytoplasm. It catalyses the reaction a (3R)-hydroxyacyl-[ACP] = a (2E)-enoyl-[ACP] + H2O. It carries out the reaction (3R)-hydroxydecanoyl-[ACP] = (2E)-decenoyl-[ACP] + H2O. The enzyme catalyses (2E)-decenoyl-[ACP] = (3Z)-decenoyl-[ACP]. It functions in the pathway lipid metabolism; fatty acid biosynthesis. Functionally, necessary for the introduction of cis unsaturation into fatty acids. Catalyzes the dehydration of (3R)-3-hydroxydecanoyl-ACP to E-(2)-decenoyl-ACP and then its isomerization to Z-(3)-decenoyl-ACP. Can catalyze the dehydratase reaction for beta-hydroxyacyl-ACPs with saturated chain lengths up to 16:0, being most active on intermediate chain length. This is 3-hydroxydecanoyl-[acyl-carrier-protein] dehydratase from Actinobacillus pleuropneumoniae serotype 5b (strain L20).